A 313-amino-acid polypeptide reads, in one-letter code: Protoheme IX farnesyltransferase (313 aa).

9 helical membrane-spanning segments follow: residues leucine 35–leucine 55, alanine 56–tryptophan 76, valine 98–leucine 118, valine 120–valine 140, isoleucine 153–glycine 173, isoleucine 180–phenylalanine 200, isoleucine 226–phenylalanine 246, alanine 248–valine 268, and leucine 292–isoleucine 312.

It belongs to the UbiA prenyltransferase family. Protoheme IX farnesyltransferase subfamily.

It is found in the cell inner membrane. The catalysed reaction is heme b + (2E,6E)-farnesyl diphosphate + H2O = Fe(II)-heme o + diphosphate. It functions in the pathway porphyrin-containing compound metabolism; heme O biosynthesis; heme O from protoheme: step 1/1. Functionally, converts heme B (protoheme IX) to heme O by substitution of the vinyl group on carbon 2 of heme B porphyrin ring with a hydroxyethyl farnesyl side group. The chain is Protoheme IX farnesyltransferase from Afipia carboxidovorans (strain ATCC 49405 / DSM 1227 / KCTC 32145 / OM5) (Oligotropha carboxidovorans).